A 506-amino-acid polypeptide reads, in one-letter code: MADATEDILRRFDCKASSPIKVPNNLSQSYQMADDSSIDLRDYMDRQKSSRNYSDSEYTPSPIKREKPETKQSAHLSTTTRLPPISPKKLFASPTKNYSQHVMQERSAPNSPQKKSLPNENDDLKNLRLEMKRLKQEYNVKIENLNYKLNLITKERDEIMKENIELTSDKSRLKTQNDLLSVDNDNLLKRKFESEKQLKNSEMKILSLEDKVEKLVSLNKSVTVKNMTMKQSLEGIQVKLKKYYDLYKECQEKHNNPQDSPPKVKIATPDPEVETQNKALQPQLQIQELVQALKNLTIAIESKNDIPSSELHYLVKILKELIAKDIFRPSSPNHQTQPVFQSTPQSKVESVNLENVPPESQPSHVSSNSQQNLSDKSRTSIPSRDNPSPNVLRAEEPQDFHNANPIQSQPKEWTREREERDGSTGYSIRSDMAEIKEFLKFLVDGVKNDQKDTNSPEESNTDGKEEEEKVHIEDKSCHCKPVSNHAAFCPVCLNREDFTVSHFLSQ.

Disordered stretches follow at residues 18–121, 252–276, 329–429, and 447–470; these read SPIK…PNEN, EKHN…VETQ, PSSP…YSIR, and KNDQ…EEKV. Positions 38-48 are enriched in basic and acidic residues; the sequence is IDLRDYMDRQK. Residues 50–59 are compositionally biased toward polar residues; it reads SRNYSDSEYT. The segment covering 63–72 has biased composition (basic and acidic residues); sequence IKREKPETKQ. The span at 94 to 119 shows a compositional bias: polar residues; sequence PTKNYSQHVMQERSAPNSPQKKSLPN. Polar residues-rich tracts occupy residues 330–353 and 361–389; these read SSPN…SVNL and QPSH…NPSP. 2 stretches are compositionally biased toward basic and acidic residues: residues 412 to 422 and 461 to 470; these read EWTREREERDG and TDGKEEEEKV.

It is found in the cytoplasm. The protein localises to the cytoskeleton. It localises to the microtubule organizing center. The protein resides in the spindle pole body. Its function is as follows. Plays a role in mitotic spindle pole body organization, possibly at the point of spindle pole body separation. Required for mitotic exit. The polypeptide is Spindle pole body protein CSA6 (Candida tropicalis (strain ATCC MYA-3404 / T1) (Yeast)).